Consider the following 146-residue polypeptide: Snake venom vascular endothelial growth factor toxin (146 aa).

The N-terminal stretch at 1-24 is a signal peptide; that stretch reads MAVYLLAVAILFCIQGWPLGTVQG. A Pyrrolidone carboxylic acid modification is found at Gln25. 3 disulfide bridges follow: Cys38/Cys80, Cys69/Cys115, and Cys73/Cys117. The disordered stretch occupies residues 118–146; it reads RPRSASGVNSRKHKRNPEEGEPRAKFPFV. The span at 133–146 shows a compositional bias: basic and acidic residues; it reads NPEEGEPRAKFPFV.

It belongs to the PDGF/VEGF growth factor family. Snake venom VEGF subfamily. Homodimer; disulfide-linked. Interacts with VEGF receptor-1 (FLT1) with a high affinity, whereas it binds to VEGF receptor-2 (KDR) with a low affinity. Does not bind VEGF receptor-3 (FLT4). As to expression, expressed by the venom gland.

Its subcellular location is the secreted. Snake venom VEGFs that may contribute to venom dispersion and prey subjugation by inducing vascular permeability and hypotension. This protein induces an increase in capillary permeability after intradermal injection, as well as a drastic hypotensive effect after intravenous injection. The hypotension is mediated by nitric oxide (NO), which is produced by VEGF-activated endothelium NO synthase. Also induces angiogenesis in vitro. Like other crotalid VEGFs, this protein interacts with VEGF receptor-1 (FLT1) with a high affinity, whereas it binds to VEGF receptor-2 (KDR) with a low affinity. The sequence is that of Snake venom vascular endothelial growth factor toxin from Bothrops jararaca (Jararaca).